The following is a 764-amino-acid chain: G-type lectin S-receptor-like serine/threonine-protein kinase SD3-1 (764 aa).

The N-terminal stretch at 1 to 24 (MKMLRALLLCLSLVFFLAFQIVVS) is a signal peptide. Bulb-type lectin domains are found at residues 25–151 (EIQL…QSFG) and 154–279 (TDTL…WKPV). Topologically, residues 25-442 (EIQLGSKLVV…TKSHSICIPC (418 aa)) are extracellular. Residues asparagine 92, asparagine 198, and asparagine 248 are each glycosylated (N-linked (GlcNAc...) asparagine). An EGF-like; atypical domain is found at 283–320 (VENQCRVFATCGSQVCSFNSSGYTECNCPFNAFVSVSD). 5 disulfide bridges follow: cysteine 287–cysteine 298, cysteine 293–cysteine 308, cysteine 332–cysteine 413, cysteine 365–cysteine 388, and cysteine 369–cysteine 375. Residues asparagine 301 and asparagine 353 are each glycosylated (N-linked (GlcNAc...) asparagine). The region spanning 332 to 413 (CKSGFNMVKF…LSSISYVKTC (82 aa)) is the Apple domain. The N-linked (GlcNAc...) asparagine glycan is linked to asparagine 423. Residues 443–463 (LVGATSTTLVLFLGFQLGIVV) form a helical membrane-spanning segment. Residues 464 to 764 (YIYRRKKKLA…SESSQSLYEP (301 aa)) are Cytoplasmic-facing. In terms of domain architecture, Protein kinase spans 466-764 (YRRKKKLAKK…SESSQSLYEP (299 aa)). ATP contacts are provided by residues 508 to 516 (IGPQIFKGV) and lysine 526. The tract at residues 586–603 (LRSKKLTWRIRTDTCLSV) is caM-binding. Positions 738-764 (DPPPPPFACARSSPTNSSESSQSLYEP) are disordered. A compositionally biased stretch (low complexity) spans 749 to 764 (SSPTNSSESSQSLYEP).

Its subcellular location is the cell membrane. The enzyme catalyses L-seryl-[protein] + ATP = O-phospho-L-seryl-[protein] + ADP + H(+). It catalyses the reaction L-threonyl-[protein] + ATP = O-phospho-L-threonyl-[protein] + ADP + H(+). The protein is G-type lectin S-receptor-like serine/threonine-protein kinase SD3-1 (SD31) of Arabidopsis thaliana (Mouse-ear cress).